The chain runs to 212 residues: Major fimbrial subunit (212 aa).

The signal sequence occupies residues 1 to 18 (MKKTLLGSLILLAFATNA). C42 and C82 are joined by a disulfide.

It belongs to the fimbrial protein family.

The protein localises to the fimbrium. Functionally, mediates adherence to oropharyngeal epithelial cells. Helps the airway colonization process. This Haemophilus influenzae protein is Major fimbrial subunit (hifA).